A 179-amino-acid chain; its full sequence is Natural killer cells antigen CD94 (179 aa).

At 1-10 (MAVSRITRWR) the chain is on the cytoplasmic side. The helical; Signal-anchor for type II membrane protein transmembrane segment at 11–31 (LMSMFFGIKCLFLIVALGVLV) threads the bilayer. The Extracellular portion of the chain corresponds to 32–179 (KNSFTIQNIQ…NRFICKQLPT (148 aa)). Cystine bridges form between C58–C70, C61–C72, C89–C174, and C152–C166. Residues 68–175 (HQCSCYFISK…CENKNRFICK (108 aa)) enclose the C-type lectin domain. The N-linked (GlcNAc...) asparagine glycan is linked to N93.

As to quaternary structure, can form disulfide-bonded heterodimer with NKG2 family members KLRC1 and KLRC2. KLRD1-KLRC1 heterodimer interacts with peptide-bound MHC-E-B2M heterotrimeric complex. KLRD1 plays a prominent role in directly interacting with MHC-E. KLRD1-KLRC1 interacts with much higher affinity with peptide-bound MHC-E-B2M than KLRD1-KLRC2. Interacts with the adapter protein TYROBP/DAP12; this interaction is required for cell surface expression and cell activation.

The protein resides in the cell membrane. In terms of biological role, immune receptor involved in self-nonself discrimination. In complex with KLRC1 or KLRC2 on cytotoxic and regulatory lymphocyte subsets, recognizes non-classical major histocompatibility (MHC) class Ib molecule MHC-E loaded with self-peptides derived from the signal sequence of classical MHC class Ia and non-classical MHC class Ib molecules. Enables cytotoxic cells to monitor the expression of MHC class I molecules in healthy cells and to tolerate self. Primarily functions as a ligand binding subunit as it lacks the capacity to signal. Its function is as follows. KLRD1-KLRC1 acts as an immune inhibitory receptor. Key inhibitory receptor on natural killer (NK) cells that regulates their activation and effector functions. Dominantly counteracts T cell receptor signaling on a subset of memory/effector CD8-positive T cells as part of an antigen-driven response to avoid autoimmunity. On intraepithelial CD8-positive gamma-delta regulatory T cells triggers TGFB1 secretion, which in turn limits the cytotoxic programming of intraepithelial CD8-positive alpha-beta T cells, distinguishing harmless from pathogenic antigens. In MHC-E-rich tumor microenvironment, acts as an immune inhibitory checkpoint and may contribute to progressive loss of effector functions of NK cells and tumor-specific T cells, a state known as cell exhaustion. Upon MHC-E-peptide binding, transmits intracellular signals through KLRC1 immunoreceptor tyrosine-based inhibition motifs (ITIMs) by recruiting INPP5D/SHIP-1 and INPPL1/SHIP-2 tyrosine phosphatases to ITIMs, and ultimately opposing signals transmitted by activating receptors through dephosphorylation of proximal signaling molecules. KLRD1-KLRC2 acts as an immune activating receptor. On cytotoxic lymphocyte subsets recognizes MHC-E loaded with signal sequence-derived peptides from non-classical MHC class Ib MHC-G molecules, likely playing a role in the generation and effector functions of adaptive NK cells and in maternal-fetal tolerance during pregnancy. Regulates the effector functions of terminally differentiated cytotoxic lymphocyte subsets, and in particular may play a role in adaptive NK cell response to viral infection. Upon MHC-E-peptide binding, transmits intracellular signals via the adapter protein TYROBP/DAP12, triggering the phosphorylation of proximal signaling molecules and cell activation. This is Natural killer cells antigen CD94 (Klrd1) from Rattus norvegicus (Rat).